The following is a 252-amino-acid chain: Imidazole glycerol phosphate synthase subunit HisF (252 aa).

Residues Asp11 and Asp130 contribute to the active site.

It belongs to the HisA/HisF family. In terms of assembly, heterodimer of HisH and HisF.

The protein resides in the cytoplasm. It carries out the reaction 5-[(5-phospho-1-deoxy-D-ribulos-1-ylimino)methylamino]-1-(5-phospho-beta-D-ribosyl)imidazole-4-carboxamide + L-glutamine = D-erythro-1-(imidazol-4-yl)glycerol 3-phosphate + 5-amino-1-(5-phospho-beta-D-ribosyl)imidazole-4-carboxamide + L-glutamate + H(+). Its pathway is amino-acid biosynthesis; L-histidine biosynthesis; L-histidine from 5-phospho-alpha-D-ribose 1-diphosphate: step 5/9. Functionally, IGPS catalyzes the conversion of PRFAR and glutamine to IGP, AICAR and glutamate. The HisF subunit catalyzes the cyclization activity that produces IGP and AICAR from PRFAR using the ammonia provided by the HisH subunit. This Acinetobacter baumannii (strain AB307-0294) protein is Imidazole glycerol phosphate synthase subunit HisF.